We begin with the raw amino-acid sequence, 504 residues long: Maturase K (504 aa).

Belongs to the intron maturase 2 family. MatK subfamily.

It localises to the plastid. The protein localises to the chloroplast. In terms of biological role, usually encoded in the trnK tRNA gene intron. Probably assists in splicing its own and other chloroplast group II introns. The chain is Maturase K from Ochroma pyramidale (Balsa).